A 180-amino-acid polypeptide reads, in one-letter code: Transcription factor HES-7.1-A (180 aa).

The bHLH domain maps to 13–70 (HRKLLKPLVEKRRRERINNSLEKLRIFLFQTLKSEKLKNPKVEKAEILECTVQFLQSR). An Orange domain is found at 84–116 (YQSGFQHCLETTLHFMNSKPDMNGVTKELLSHQ). The short motif at 176 to 179 (WRPW) is the WRPW motif element.

In terms of assembly, transcription repression requires formation of a complex with a corepressor protein of the Groucho/TLE family. Expressed in the presumptive midbrain-hindbrain boundary (MHB) as early as the early gastrula stage (stage 10.5). Expression in the MHB continues through to tailbud stage. Also transiently expressed in the eye anlage at late neurula stage.

The protein resides in the nucleus. Functionally, transcriptional repressor. Represses transcription from both N box- and E box-containing promoters. Demarcates the prospective midbrain-hindbrain boundary (MHB) region in the neuroectoderm in early gastrulae embryos by repressing transcription of a number of target genes. The polypeptide is Transcription factor HES-7.1-A (hes7.1-a) (Xenopus laevis (African clawed frog)).